The chain runs to 286 residues: Neuferricin homolog (286 aa).

The first 23 residues, methionine 1–glycine 23, serve as a signal peptide directing secretion. The Cytochrome b5 heme-binding domain maps to alanine 61–asparagine 145. Residues histidine 176–proline 200 are a coiled coil.

Belongs to the cytochrome b5 family. MAPR subfamily.

It is found in the secreted. Functionally, heme-binding protein. In Drosophila pseudoobscura pseudoobscura (Fruit fly), this protein is Neuferricin homolog.